A 215-amino-acid polypeptide reads, in one-letter code: Sec-independent protein translocase protein TatB (215 aa).

Residues 1-21 (MLDIGWTELVVIAIVLIIVVG) traverse the membrane as a helical segment. 2 disordered regions span residues 95-119 (DLQKATTPDRPPASATPEPLVEPVN) and 138-215 (AVSS…KGDA). The span at 145–157 (QMDRAADVPKASE) shows a compositional bias: basic and acidic residues. Positions 203–215 (SKTRAASRKKGDA) are enriched in basic residues.

This sequence belongs to the TatB family. In terms of assembly, the Tat system comprises two distinct complexes: a TatABC complex, containing multiple copies of TatA, TatB and TatC subunits, and a separate TatA complex, containing only TatA subunits. Substrates initially bind to the TatABC complex, which probably triggers association of the separate TatA complex to form the active translocon.

It localises to the cell inner membrane. In terms of biological role, part of the twin-arginine translocation (Tat) system that transports large folded proteins containing a characteristic twin-arginine motif in their signal peptide across membranes. Together with TatC, TatB is part of a receptor directly interacting with Tat signal peptides. TatB may form an oligomeric binding site that transiently accommodates folded Tat precursor proteins before their translocation. The protein is Sec-independent protein translocase protein TatB of Rhizobium meliloti (strain 1021) (Ensifer meliloti).